Reading from the N-terminus, the 344-residue chain is GTPase Obg (344 aa).

One can recognise an Obg domain in the interval 1–159 (MKFLDLAKVY…RTIWLRLKLI (159 aa)). One can recognise an OBG-type G domain in the interval 160 to 327 (ADVGLLGLPN…VLRALRARID (168 aa)). GTP is bound by residues 166-173 (GLPNAGKS), 191-195 (FTTLH), 212-215 (DIPG), 279-282 (NKID), and 308-310 (SGA). Residues Ser-173 and Thr-193 each contribute to the Mg(2+) site.

This sequence belongs to the TRAFAC class OBG-HflX-like GTPase superfamily. OBG GTPase family. As to quaternary structure, monomer. It depends on Mg(2+) as a cofactor.

It is found in the cytoplasm. In terms of biological role, an essential GTPase which binds GTP, GDP and possibly (p)ppGpp with moderate affinity, with high nucleotide exchange rates and a fairly low GTP hydrolysis rate. Plays a role in control of the cell cycle, stress response, ribosome biogenesis and in those bacteria that undergo differentiation, in morphogenesis control. The chain is GTPase Obg from Ruegeria pomeroyi (strain ATCC 700808 / DSM 15171 / DSS-3) (Silicibacter pomeroyi).